A 350-amino-acid chain; its full sequence is Galactokinase (350 aa).

A substrate-binding site is contributed by 15-18 (EHTD). Residues serine 47 and 99–105 (GAGLSSS) contribute to the ATP site. Mg(2+) is bound by residues serine 105 and glutamate 137. Aspartate 149 acts as the Proton acceptor in catalysis. Residue tyrosine 198 participates in substrate binding.

It belongs to the GHMP kinase family. GalK subfamily.

It is found in the cytoplasm. It catalyses the reaction alpha-D-galactose + ATP = alpha-D-galactose 1-phosphate + ADP + H(+). It participates in carbohydrate metabolism; galactose metabolism. In terms of biological role, catalyzes the transfer of the gamma-phosphate of ATP to D-galactose to form alpha-D-galactose-1-phosphate (Gal-1-P). The polypeptide is Galactokinase (Pyrococcus horikoshii (strain ATCC 700860 / DSM 12428 / JCM 9974 / NBRC 100139 / OT-3)).